The sequence spans 121 residues: Large ribosomal subunit protein uL18 (121 aa).

This sequence belongs to the universal ribosomal protein uL18 family. As to quaternary structure, part of the 50S ribosomal subunit; part of the 5S rRNA/L5/L18/L25 subcomplex. Contacts the 5S and 23S rRNAs.

This is one of the proteins that bind and probably mediate the attachment of the 5S RNA into the large ribosomal subunit, where it forms part of the central protuberance. The protein is Large ribosomal subunit protein uL18 of Ureaplasma parvum serovar 3 (strain ATCC 27815 / 27 / NCTC 11736).